Reading from the N-terminus, the 232-residue chain is Phosphatidylserine decarboxylase proenzyme (232 aa).

S190 acts as the Schiff-base intermediate with substrate; via pyruvic acid in catalysis. S190 bears the Pyruvic acid (Ser); by autocatalysis mark.

Belongs to the phosphatidylserine decarboxylase family. PSD-A subfamily. As to quaternary structure, heterodimer of a large membrane-associated beta subunit and a small pyruvoyl-containing alpha subunit. The cofactor is pyruvate. In terms of processing, is synthesized initially as an inactive proenzyme. Formation of the active enzyme involves a self-maturation process in which the active site pyruvoyl group is generated from an internal serine residue via an autocatalytic post-translational modification. Two non-identical subunits are generated from the proenzyme in this reaction, and the pyruvate is formed at the N-terminus of the alpha chain, which is derived from the carboxyl end of the proenzyme. The post-translation cleavage follows an unusual pathway, termed non-hydrolytic serinolysis, in which the side chain hydroxyl group of the serine supplies its oxygen atom to form the C-terminus of the beta chain, while the remainder of the serine residue undergoes an oxidative deamination to produce ammonia and the pyruvoyl prosthetic group on the alpha chain.

The protein localises to the cell membrane. It carries out the reaction a 1,2-diacyl-sn-glycero-3-phospho-L-serine + H(+) = a 1,2-diacyl-sn-glycero-3-phosphoethanolamine + CO2. The protein operates within phospholipid metabolism; phosphatidylethanolamine biosynthesis; phosphatidylethanolamine from CDP-diacylglycerol: step 2/2. Functionally, catalyzes the formation of phosphatidylethanolamine (PtdEtn) from phosphatidylserine (PtdSer). In Rhodopseudomonas palustris (strain BisA53), this protein is Phosphatidylserine decarboxylase proenzyme.